Consider the following 329-residue polypeptide: UDP-2,3-diacylglucosamine pyrophosphatase LpxG (329 aa).

The helical transmembrane segment at 2–24 threads the bilayer; sequence FVSVGITASLTTILAAPVLTWVW. Positions 59, 61, 91, 123, 257, and 259 each coordinate a divalent metal cation.

The protein belongs to the metallophosphoesterase superfamily. LpxG family. Mn(2+) serves as cofactor.

The protein resides in the cell inner membrane. It catalyses the reaction UDP-2,3-diacyl-alpha-D-glucosamine + H2O = 2,3-diacyl-alpha-D-glucosaminyl 1-phosphate + UMP + 2 H(+). The protein operates within glycolipid biosynthesis; lipid IV(A) biosynthesis. In terms of biological role, hydrolyzes the pyrophosphate bond of UDP-2,3-diacylglucosamine to form 2,3-diacylglucosamine 1-phosphate (lipid X) and UMP by catalyzing the attack of water at the alpha-P atom. Involved in the biosynthesis of lipid A, a phosphorylated glycolipid that anchors the lipooligosaccharide (LOS) to the outer membrane of the cell. Can functionally complement lpxH deficiency in E.coli. Overexpression of LpxG results in toxic accumulation of lipid X and profoundly reduces the infectivity of C.trachomatis. Can utilize UDP-2-N,3-O-bis((3R)-3-hydroxytetradecanoyl)-alpha-D-glucosamine as substrate in vitro, but the substrate is likely UDP-2-N-((3R)-3-hydroxyicosanoyl),3-O-(tetradecanoyl)-alpha-D-glucosamine in vivo. This Chlamydia trachomatis serovar D (strain ATCC VR-885 / DSM 19411 / UW-3/Cx) protein is UDP-2,3-diacylglucosamine pyrophosphatase LpxG.